A 407-amino-acid chain; its full sequence is S-adenosylmethionine synthase (407 aa).

H15 contacts ATP. D17 is a Mg(2+) binding site. Residue E43 participates in K(+) binding. Positions 56 and 100 each coordinate L-methionine. The tract at residues 100–110 (QSPDIAQGVDE) is flexible loop. ATP-binding positions include 171-173 (DGK), 248-249 (KF), D257, 263-264 (RK), A280, and K284. D257 serves as a coordination point for L-methionine. An L-methionine-binding site is contributed by K288.

Belongs to the AdoMet synthase family. As to quaternary structure, homotetramer; dimer of dimers. Mg(2+) serves as cofactor. K(+) is required as a cofactor.

The protein resides in the cytoplasm. The enzyme catalyses L-methionine + ATP + H2O = S-adenosyl-L-methionine + phosphate + diphosphate. The protein operates within amino-acid biosynthesis; S-adenosyl-L-methionine biosynthesis; S-adenosyl-L-methionine from L-methionine: step 1/1. In terms of biological role, catalyzes the formation of S-adenosylmethionine (AdoMet) from methionine and ATP. The overall synthetic reaction is composed of two sequential steps, AdoMet formation and the subsequent tripolyphosphate hydrolysis which occurs prior to release of AdoMet from the enzyme. The polypeptide is S-adenosylmethionine synthase (Synechococcus sp. (strain RCC307)).